The primary structure comprises 434 residues: MSILTIHARQIFDSRGNPTVEVDLKTSKGLFRAAVPSGASTGVHEALELRDTNSKAYMKKGVLTAVSNVNKIIAPALINKNIPVTNQAAIDKYMIDLDGTENKEKLGANAILGVSLAVCKAGAAEAGLPLYRYIARLAGHEDVIMPVPAFNVINGGSHAGNKLAMQEFMILPTGASSFTEAMQIGTEVYHNLKAVIKREYGLDACNVGDEGGFAPNIQDNMKGLQLLEEAIKIAGYTGKVEIGMDCAASEFHKNGKYDLDFKNPHSAESTWLSPDAMANMYKQMISKFPIVSIEDPFDQDDWETWPKLTSSTNIQIVGDDLTVTNPKRIKQAIASKACNCLLLKVNQIGSLTESIEACKLAQDSGWGVMVSHRSGETEDTFIADLVVGLCTGQIKTGAPCRSDRLAKYNQLLRIEEELGTAAKYAGKNFRHPKV.

The substrate site is built by H158 and E167. The Proton donor role is filled by E210. 3 residues coordinate Mg(2+): D245, E294, and D319. The substrate site is built by E294 and D319. Residue K344 is the Proton acceptor of the active site. Substrate is bound by residues 371–374 (SHRS) and K395.

Belongs to the enolase family. In terms of assembly, homodimer. Requires Mg(2+) as cofactor.

It is found in the cytoplasm. The enzyme catalyses (2R)-2-phosphoglycerate = phosphoenolpyruvate + H2O. It functions in the pathway carbohydrate degradation; glycolysis; pyruvate from D-glyceraldehyde 3-phosphate: step 4/5. In Schistosoma mansoni (Blood fluke), this protein is Enolase (ENO).